The sequence spans 299 residues: Oxygen-dependent coproporphyrinogen-III oxidase (299 aa).

Position 92 (Ser92) interacts with substrate. Mn(2+) contacts are provided by His96 and His106. His106 acts as the Proton donor in catalysis. Residue 108 to 110 (NVR) coordinates substrate. Positions 145 and 175 each coordinate Mn(2+). The tract at residues 240–275 (YVEFNLVWDRGTLFGLQTGGRTESILMSMPPLVRWE) is important for dimerization. Substrate is bound at residue 258-260 (GGR).

Belongs to the aerobic coproporphyrinogen-III oxidase family. Homodimer. It depends on Mn(2+) as a cofactor.

It localises to the cytoplasm. It carries out the reaction coproporphyrinogen III + O2 + 2 H(+) = protoporphyrinogen IX + 2 CO2 + 2 H2O. Its pathway is porphyrin-containing compound metabolism; protoporphyrin-IX biosynthesis; protoporphyrinogen-IX from coproporphyrinogen-III (O2 route): step 1/1. In terms of biological role, involved in the heme biosynthesis. Catalyzes the aerobic oxidative decarboxylation of propionate groups of rings A and B of coproporphyrinogen-III to yield the vinyl groups in protoporphyrinogen-IX. This chain is Oxygen-dependent coproporphyrinogen-III oxidase, found in Escherichia coli O157:H7.